An 87-amino-acid polypeptide reads, in one-letter code: MARVTVEDCLEKLDNRFELVLVAGKRAHQLQSGGKEPRVAWENDKPTVVALREIAEGLVTAESVDNPIADRSADVDELALLTQSFGE.

Belongs to the RNA polymerase subunit omega family. The RNAP catalytic core consists of 2 alpha, 1 beta, 1 beta' and 1 omega subunit. When a sigma factor is associated with the core the holoenzyme is formed, which can initiate transcription.

The catalysed reaction is RNA(n) + a ribonucleoside 5'-triphosphate = RNA(n+1) + diphosphate. Promotes RNA polymerase assembly. Latches the N- and C-terminal regions of the beta' subunit thereby facilitating its interaction with the beta and alpha subunits. In Alcanivorax borkumensis (strain ATCC 700651 / DSM 11573 / NCIMB 13689 / SK2), this protein is DNA-directed RNA polymerase subunit omega.